The following is a 279-amino-acid chain: Universal stress protein MT2087 (279 aa).

Belongs to the universal stress protein A family.

This Mycobacterium tuberculosis (strain CDC 1551 / Oshkosh) protein is Universal stress protein MT2087.